We begin with the raw amino-acid sequence, 216 residues long: Uracil phosphoribosyltransferase (216 aa).

Residues R85, R110, and 135–143 (DPMVATGYS) contribute to the 5-phospho-alpha-D-ribose 1-diphosphate site. Residues I200 and 205-207 (GDA) contribute to the uracil site. 5-phospho-alpha-D-ribose 1-diphosphate is bound at residue D206.

It belongs to the UPRTase family. Mg(2+) is required as a cofactor.

The enzyme catalyses UMP + diphosphate = 5-phospho-alpha-D-ribose 1-diphosphate + uracil. It participates in pyrimidine metabolism; UMP biosynthesis via salvage pathway; UMP from uracil: step 1/1. With respect to regulation, allosterically activated by GTP. Functionally, catalyzes the conversion of uracil and 5-phospho-alpha-D-ribose 1-diphosphate (PRPP) to UMP and diphosphate. The sequence is that of Uracil phosphoribosyltransferase from Burkholderia multivorans (strain ATCC 17616 / 249).